The sequence spans 113 residues: Retrotransposon Gag-like protein 8B (113 aa).

It belongs to the FAM127 family.

In Homo sapiens (Human), this protein is Retrotransposon Gag-like protein 8B (RTL8B).